We begin with the raw amino-acid sequence, 224 residues long: Cerebellin-2 (224 aa).

An N-terminal signal peptide occupies residues 1–51 (MPAPGQGPRGPLLSMPGRRGALREPADFGSSLGAVLALLLLLLPACCPVRA). Residues Asn53 and Asn110 are each glycosylated (N-linked (GlcNAc...) asparagine). The region spanning 88 to 224 (SGSAKVAFSA…TFSGFLVFPL (137 aa)) is the C1q domain.

In terms of assembly, homohexamer; disulfide-linked homotrimers. The trimers are assembled via the globular C1q domains. The trimers associate via N-terminal cysteine residues to form disulfide-linked hexamers. May form homooligomers or heterooligomers with CBLN1 and CBLN3 prior to secretion. Once secreted, does not interact with other CBLN family members. Interacts with GRID2, and more weakly with GRID1. Interacts with NRXN1 and NRXN2 long and short isoforms produced by alternative promoter usage. Weakly interacts with NRXN3 short isoform and not at all with NRXN3 long isoform. Expressed in various brain regions with higher levels in the olfactory bulb, cerebral cortex, certain thalamic and hypothalamic nuclei, superior and inferior colliculi and some brainstem nuclei. Highly expressed in the dorsal medial habenula.

Its subcellular location is the secreted. Acts as a synaptic organizer in specific subsets of neurons in the brain. Essential for long-term maintenance but not establishment of excitatory synapses. Functions as part of a trans-synaptic complex by binding to postsynaptic GRID1 and presynaptic neurexins. This interaction helps regulate the activity of NMDA and AMPA receptors at hippocampal synapses without affecting synapse formation. NRXN1B-CBLN2-GRID1 complex transduce presynaptic signals into postsynaptic NMDAR response. NRXN3B-CBLN2-GRID1 complex transduce presynaptic signals into postsynaptic AMPAR response. In Mus musculus (Mouse), this protein is Cerebellin-2 (Cbln2).